The sequence spans 125 residues: Large ribosomal subunit protein bL12 (125 aa).

The protein belongs to the bacterial ribosomal protein bL12 family. In terms of assembly, homodimer. Part of the ribosomal stalk of the 50S ribosomal subunit. Forms a multimeric L10(L12)X complex, where L10 forms an elongated spine to which 2 to 4 L12 dimers bind in a sequential fashion. Binds GTP-bound translation factors.

Its function is as follows. Forms part of the ribosomal stalk which helps the ribosome interact with GTP-bound translation factors. Is thus essential for accurate translation. This chain is Large ribosomal subunit protein bL12, found in Rickettsia typhi (strain ATCC VR-144 / Wilmington).